The chain runs to 349 residues: Neutral protease 2 homolog ACLA_052720 (349 aa).

The signal sequence occupies residues 1-19 (MQLTVLASAILALAQGALA). Residues 20–172 (IPAKAPALDV…PAAINLLDRR (153 aa)) constitute a propeptide that is removed on maturation. Cystine bridges form between Cys-178/Cys-250 and Cys-257/Cys-275. His-300 serves as a coordination point for Zn(2+). Glu-301 is a catalytic residue. Positions 304 and 315 each coordinate Zn(2+).

Belongs to the peptidase M35 family. Zn(2+) is required as a cofactor.

The protein resides in the secreted. The enzyme catalyses Preferential cleavage of bonds with hydrophobic residues in P1'. Also 3-Asn-|-Gln-4 and 8-Gly-|-Ser-9 bonds in insulin B chain.. Functionally, secreted metalloproteinase that allows assimilation of proteinaceous substrates. Shows high activities on basic nuclear substrates such as histone and protamine. This Aspergillus clavatus (strain ATCC 1007 / CBS 513.65 / DSM 816 / NCTC 3887 / NRRL 1 / QM 1276 / 107) protein is Neutral protease 2 homolog ACLA_052720.